The chain runs to 357 residues: MTRPTLRETVARLAPGTGLRDGLERILRGRTGALIVLGNDENVEAICDGGFALDVRYAPTRLRELAKMDGAVVLSTDGSRIVRANVQLVPDPSIATDESGTRHRSAERAAIQTGYPVISVSHSMNIVTVYVGGERHVVADSATILSRANQAIATLERYKIRLDEVSRQLSRAEIEDFVTLRDVLTVVQRLELVRRIGQVIDNDVVELGTDGRQLRLQLDELLGGNDNARELIVRDYHASPEQLSEAQMTATLDELDALSDTELLDFTALAKVFGYPTTTEAQDSAVSPRGYRALAGIPRLQFAHADLLVRSFGTLQNVLAASASDLQSIDGIGAMWARHVREGLSQLAESTITDSLS.

The 139-residue stretch at 3–141 (RPTLRETVAR…GGERHVVADS (139 aa)) folds into the DAC domain. ATP-binding positions include G70, L88, and 101 to 105 (TRHRS).

This sequence belongs to the DisA family. As to quaternary structure, homooctamer. It depends on Mg(2+) as a cofactor.

The catalysed reaction is 2 ATP = 3',3'-c-di-AMP + 2 diphosphate. Participates in a DNA-damage check-point. DisA forms globular foci that rapidly scan along the chromosomes searching for lesions. In terms of biological role, also has diadenylate cyclase activity, catalyzing the condensation of 2 ATP molecules into cyclic di-AMP (c-di-AMP). c-di-AMP likely acts as a signaling molecule that may couple DNA integrity with a cellular process. The protein is DNA integrity scanning protein DisA of Mycolicibacterium paratuberculosis (strain ATCC BAA-968 / K-10) (Mycobacterium paratuberculosis).